The sequence spans 166 residues: Crossover junction endodeoxyribonuclease RuvC (166 aa).

Residues Asp7, Glu67, and Asp140 contribute to the active site. Residues Asp7, Glu67, and Asp140 each coordinate Mg(2+).

This sequence belongs to the RuvC family. As to quaternary structure, homodimer which binds Holliday junction (HJ) DNA. The HJ becomes 2-fold symmetrical on binding to RuvC with unstacked arms; it has a different conformation from HJ DNA in complex with RuvA. In the full resolvosome a probable DNA-RuvA(4)-RuvB(12)-RuvC(2) complex forms which resolves the HJ. The cofactor is Mg(2+).

Its subcellular location is the cytoplasm. It catalyses the reaction Endonucleolytic cleavage at a junction such as a reciprocal single-stranded crossover between two homologous DNA duplexes (Holliday junction).. In terms of biological role, the RuvA-RuvB-RuvC complex processes Holliday junction (HJ) DNA during genetic recombination and DNA repair. Endonuclease that resolves HJ intermediates. Cleaves cruciform DNA by making single-stranded nicks across the HJ at symmetrical positions within the homologous arms, yielding a 5'-phosphate and a 3'-hydroxyl group; requires a central core of homology in the junction. The consensus cleavage sequence is 5'-(A/T)TT(C/G)-3'. Cleavage occurs on the 3'-side of the TT dinucleotide at the point of strand exchange. HJ branch migration catalyzed by RuvA-RuvB allows RuvC to scan DNA until it finds its consensus sequence, where it cleaves and resolves the cruciform DNA. The chain is Crossover junction endodeoxyribonuclease RuvC from Ruminiclostridium cellulolyticum (strain ATCC 35319 / DSM 5812 / JCM 6584 / H10) (Clostridium cellulolyticum).